The chain runs to 601 residues: Glutamyl-tRNA(Gln) amidotransferase subunit B, mitochondrial (601 aa).

A mitochondrion-targeting transit peptide spans 1–52 (MLQQWLRQSPRAARVLRGSCCRGPQSGSLRHSPLPTAPHRCIRSLQTSATES).

Belongs to the GatB/GatE family. GatB subfamily. As to quaternary structure, subunit of the heterotrimeric GatCAB amidotransferase (AdT) complex, composed of A, B and C subunits.

Its subcellular location is the mitochondrion. It carries out the reaction L-glutamyl-tRNA(Gln) + L-glutamine + ATP + H2O = L-glutaminyl-tRNA(Gln) + L-glutamate + ADP + phosphate + H(+). Its function is as follows. Allows the formation of correctly charged Gln-tRNA(Gln) through the transamidation of misacylated Glu-tRNA(Gln) in the mitochondria. The reaction takes place in the presence of glutamine and ATP through an activated gamma-phospho-Glu-tRNA(Gln). This chain is Glutamyl-tRNA(Gln) amidotransferase subunit B, mitochondrial, found in Aspergillus fumigatus (strain ATCC MYA-4609 / CBS 101355 / FGSC A1100 / Af293) (Neosartorya fumigata).